A 421-amino-acid polypeptide reads, in one-letter code: MLYLEDYLEMIEQLPMDLRDRFTEMREMDLQVQNAMDQLEQRVSEFFMNAKKNKPEWREEQMASIKKDYYKALEDADEKVQLANQIYDLVDRHLRKLDQELAKFKMELEADNAGITEILERRSLELDAPSQPVNNHHAHSHTPVEKRKYNPTSHHTATDHIPEKKFKSEALLSTLTSDASKENTLGCRNNNSTASCNNAYNVNSSQPLASYNIGSLSSGAGAGAITMAAAQAVQATAQMKEGRRTSSLKASYEAFKNNDFQLGKEFSMPRETAGYSSSSALMTTLTQNASSSAADSRSGRKSKNNTKSSSQQSSSSSSSSSSSSLSLCSSSSTVVQEVSQQTTVVPESDSNSQVDWTYDPNEPRYCICNQVSYGEMVGCDNQDCPIEWFHYGCVGLTEAPKGKWFCPQCTAAMKRRGSRHK.

The tract at residues 129-164 (PSQPVNNHHAHSHTPVEKRKYNPTSHHTATDHIPEK) is disordered. Residues Lys-148, Lys-165, and Lys-167 each participate in a glycyl lysine isopeptide (Lys-Gly) (interchain with G-Cter in SUMO2) cross-link. Residue Lys-181 is modified to N6-acetyllysine. A Glycyl lysine isopeptide (Lys-Gly) (interchain with G-Cter in SUMO2) cross-link involves residue Lys-256. Lys-264 bears the N6-acetyllysine mark. The disordered stretch occupies residues 286–324 (TQNASSSAADSRSGRKSKNNTKSSSQQSSSSSSSSSSSS). Residues 308–324 (SSSQQSSSSSSSSSSSS) are compositionally biased toward low complexity. The segment at 363–412 (PRYCICNQVSYGEMVGCDNQDCPIEWFHYGCVGLTEAPKGKWFCPQCTAA) adopts a PHD-type zinc-finger fold. Zn(2+)-binding residues include Cys-366, Cys-368, Cys-379, Cys-384, His-390, Cys-393, Cys-406, and Cys-409.

The protein belongs to the ING family. As to quaternary structure, interacts with H3K4me3 and to a lesser extent with H3K4me2. Component of the NuA4 histone acetyltransferase complex which contains the catalytic subunit KAT5/TIP60 and the subunits EP400, TRRAP/PAF400, BRD8/SMAP, EPC1, DMAP1/DNMAP1, RUVBL1/TIP49, RUVBL2, ING3, actin, ACTL6A/BAF53A, MORF4L1/MRG15, MORF4L2/MRGX, MRGBP, YEATS4/GAS41, VPS72/YL1 and MEAF6. The NuA4 complex interacts with MYC. HTATTIP/TIP60, EPC1, and ING3 together constitute a minimal HAT complex termed Piccolo NuA4. Component of a SWR1-like complex.

It is found in the nucleus. Component of the NuA4 histone acetyltransferase (HAT) complex which is involved in transcriptional activation of select genes principally by acetylation of nucleosomal histones H4 and H2A. This modification may both alter nucleosome - DNA interactions and promote interaction of the modified histones with other proteins which positively regulate transcription. This complex may be required for the activation of transcriptional programs associated with oncogene and proto-oncogene mediated growth induction, tumor suppressor mediated growth arrest and replicative senescence, apoptosis, and DNA repair. NuA4 may also play a direct role in DNA repair when directly recruited to sites of DNA damage. Component of a SWR1-like complex that specifically mediates the removal of histone H2A.Z/H2AZ1 from the nucleosome. In Rattus norvegicus (Rat), this protein is Inhibitor of growth protein 3 (Ing3).